The following is a 444-amino-acid chain: Tubulin beta chain (444 aa).

GTP-binding residues include Gln-11, Glu-69, Ser-138, Gly-142, Thr-143, Gly-144, Asn-204, and Asn-226. Glu-69 contributes to the Mg(2+) binding site.

It belongs to the tubulin family. As to quaternary structure, dimer of alpha and beta chains. A typical microtubule is a hollow water-filled tube with an outer diameter of 25 nm and an inner diameter of 15 nM. Alpha-beta heterodimers associate head-to-tail to form protofilaments running lengthwise along the microtubule wall with the beta-tubulin subunit facing the microtubule plus end conferring a structural polarity. Microtubules usually have 13 protofilaments but different protofilament numbers can be found in some organisms and specialized cells. Mg(2+) is required as a cofactor.

The protein localises to the cytoplasm. The protein resides in the cytoskeleton. Functionally, tubulin is the major constituent of microtubules, a cylinder consisting of laterally associated linear protofilaments composed of alpha- and beta-tubulin heterodimers. Microtubules grow by the addition of GTP-tubulin dimers to the microtubule end, where a stabilizing cap forms. Below the cap, tubulin dimers are in GDP-bound state, owing to GTPase activity of alpha-tubulin. The sequence is that of Tubulin beta chain from Euplotoides octocarinatus (Freshwater ciliate).